A 195-amino-acid polypeptide reads, in one-letter code: Dual-action ribosomal maturation protein DarP (195 aa).

It belongs to the DarP family.

It localises to the cytoplasm. In terms of biological role, member of a network of 50S ribosomal subunit biogenesis factors which assembles along the 30S-50S interface, preventing incorrect 23S rRNA structures from forming. Promotes peptidyl transferase center (PTC) maturation. The polypeptide is Dual-action ribosomal maturation protein DarP (Stenotrophomonas maltophilia (strain K279a)).